Consider the following 210-residue polypeptide: Large ribosomal subunit protein uL4 (210 aa).

A disordered region spans residues 49–76; the sequence is HCTKTRSEVSGGGKKPWRQKHTGRARHG. Over residues 63 to 76 the composition is skewed to basic residues; that stretch reads KPWRQKHTGRARHG.

The protein belongs to the universal ribosomal protein uL4 family. Part of the 50S ribosomal subunit.

One of the primary rRNA binding proteins, this protein initially binds near the 5'-end of the 23S rRNA. It is important during the early stages of 50S assembly. It makes multiple contacts with different domains of the 23S rRNA in the assembled 50S subunit and ribosome. In terms of biological role, forms part of the polypeptide exit tunnel. The sequence is that of Large ribosomal subunit protein uL4 from Thermodesulfovibrio yellowstonii (strain ATCC 51303 / DSM 11347 / YP87).